The following is a 785-amino-acid chain: 1-phosphatidylinositol 4,5-bisphosphate phosphodiesterase delta-3 (785 aa).

Positions 1–43 are disordered; it reads MLCGGWKRSRRSPEESRVSAQVAAPLAFPPSPASSDSSTKRPG. The 104-residue stretch at 65 to 168 folds into the PH domain; it reads SRLLKIRSRT…WVRGLAKLRA (104 aa). A substrate binding region spans residues 69–97; that stretch reads KIRSRTWHKERLYRLQEDGLSVWFQRRIP. At Ser-101 the chain carries Phosphoserine. EF-hand domains are found at residues 178–213, 214–249, and 246–281; these read RLDH…VNVD, MNDM…LLKR, and LLKR…QGED. Positions 191, 193, 195, 197, 202, 227, 229, 231, 233, and 238 each coordinate Ca(2+). Residues 333 to 478 enclose the PI-PLC X-box domain; it reads QDMGQPLAHY…LKGRILVKGK (146 aa). His-348 is a catalytic residue. 3 residues coordinate Ca(2+): Asn-349, Glu-378, and Asp-380. His-393 is an active-site residue. Glu-427 serves as a coordination point for Ca(2+). Residues Lys-476 and Lys-478 each contribute to the substrate site. Residues 484–493 are compositionally biased toward basic and acidic residues; it reads RSEDGRILSD. Positions 484–517 are disordered; that stretch reads RSEDGRILSDREEEEEEEEEAEEALEAAEQRSRA. Residue Ser-492 is modified to Phosphoserine. Positions 494–509 are enriched in acidic residues; the sequence is REEEEEEEEEAEEALE. The region spanning 524-640 is the PI-PLC Y-box domain; the sequence is LSALAVYCCA…GYVLKPAYLR (117 aa). Residue Ser-553 participates in substrate binding. A Phosphoserine modification is found at Ser-569. Arg-580 contacts substrate. The C2 domain maps to 636–765; the sequence is PAYLRQLNTT…QGYRHIHLLS (130 aa). Positions 679, 681, 705, 734, 735, and 736 each coordinate Ca(2+).

Ca(2+) is required as a cofactor. Expressed in cerebellum and cerebral cortex.

Its subcellular location is the membrane. The protein resides in the cytoplasm. It is found in the cleavage furrow. The enzyme catalyses a 1,2-diacyl-sn-glycero-3-phospho-(1D-myo-inositol-4,5-bisphosphate) + H2O = 1D-myo-inositol 1,4,5-trisphosphate + a 1,2-diacyl-sn-glycerol + H(+). Strongly activated by phosphatidic acid. Inhibited by phosphatidylethanolamine (PtdEtn), phosphatidylcholine (PtdCho), sphingomyelin and phosphatidylserine (PtdSer). Functionally, hydrolyzes the phosphatidylinositol 4,5-bisphosphate (PIP2) to generate 2 second messenger molecules diacylglycerol (DAG) and inositol 1,4,5-trisphosphate (IP3). DAG mediates the activation of protein kinase C (PKC), while IP3 releases Ca(2+) from intracellular stores. Essential for trophoblast and placental development. May participate in cytokinesis by hydrolyzing PIP2 at the cleavage furrow. Regulates neurite outgrowth through the inhibition of RhoA/Rho kinase signaling. This is 1-phosphatidylinositol 4,5-bisphosphate phosphodiesterase delta-3 from Mus musculus (Mouse).